The following is a 244-amino-acid chain: Probable 2-phosphosulfolactate phosphatase (244 aa).

The protein belongs to the ComB family. Requires Mg(2+) as cofactor.

The catalysed reaction is (2R)-O-phospho-3-sulfolactate + H2O = (2R)-3-sulfolactate + phosphate. The polypeptide is Probable 2-phosphosulfolactate phosphatase (Thermosynechococcus vestitus (strain NIES-2133 / IAM M-273 / BP-1)).